The sequence spans 327 residues: Cell division protein ZipA (327 aa).

Topologically, residues 1 to 5 are periplasmic; it reads MQDLR. The helical transmembrane segment at 6 to 26 threads the bilayer; it reads LILIVVGAIAIIALLLHGLWT. The Cytoplasmic segment spans residues 27 to 327; that stretch reads SRKERSSLFR…REVLDANTIA (301 aa). The span at 60-71 shows a compositional bias: basic and acidic residues; that stretch reads GEVRVRTSHPQE. Residues 60–182 are disordered; the sequence is GEVRVRTSHP…EPVAPAPEAK (123 aa). 2 stretches are compositionally biased toward polar residues: residues 94–103 and 163–173; these read KSAQVKTASR and APQQHVESQQE.

It belongs to the ZipA family. In terms of assembly, interacts with FtsZ via their C-terminal domains.

The protein localises to the cell inner membrane. In terms of biological role, essential cell division protein that stabilizes the FtsZ protofilaments by cross-linking them and that serves as a cytoplasmic membrane anchor for the Z ring. Also required for the recruitment to the septal ring of downstream cell division proteins. The polypeptide is Cell division protein ZipA (Yersinia pseudotuberculosis serotype O:1b (strain IP 31758)).